The primary structure comprises 224 residues: Large ribosomal subunit protein uL4 (224 aa).

The segment at Ala-52–Gln-109 is disordered.

It belongs to the universal ribosomal protein uL4 family. As to quaternary structure, part of the 50S ribosomal subunit.

In terms of biological role, one of the primary rRNA binding proteins, this protein initially binds near the 5'-end of the 23S rRNA. It is important during the early stages of 50S assembly. It makes multiple contacts with different domains of the 23S rRNA in the assembled 50S subunit and ribosome. Forms part of the polypeptide exit tunnel. The polypeptide is Large ribosomal subunit protein uL4 (Mycobacterium ulcerans (strain Agy99)).